Reading from the N-terminus, the 365-residue chain is DNA replication and repair protein RecF (365 aa).

30-37 is an ATP binding site; it reads GRNAQGKT.

Belongs to the RecF family.

Its subcellular location is the cytoplasm. Functionally, the RecF protein is involved in DNA metabolism; it is required for DNA replication and normal SOS inducibility. RecF binds preferentially to single-stranded, linear DNA. It also seems to bind ATP. The protein is DNA replication and repair protein RecF of Streptococcus pneumoniae serotype 2 (strain D39 / NCTC 7466).